Here is a 156-residue protein sequence, read N- to C-terminus: Ribosome maturation factor RimP (156 aa).

The protein belongs to the RimP family.

The protein resides in the cytoplasm. In terms of biological role, required for maturation of 30S ribosomal subunits. The polypeptide is Ribosome maturation factor RimP (Oceanobacillus iheyensis (strain DSM 14371 / CIP 107618 / JCM 11309 / KCTC 3954 / HTE831)).